Reading from the N-terminus, the 174-residue chain is Ribosome maturation factor RimP (174 aa).

It belongs to the RimP family.

It localises to the cytoplasm. Required for maturation of 30S ribosomal subunits. This is Ribosome maturation factor RimP from Acinetobacter baylyi (strain ATCC 33305 / BD413 / ADP1).